A 378-amino-acid chain; its full sequence is Queuine tRNA-ribosyltransferase (378 aa).

Asp93 serves as the catalytic Proton acceptor. Substrate is bound by residues 93 to 97, Asp147, Gln189, and Gly216; that span reads DSGGF. The RNA binding stretch occupies residues 247 to 253; the sequence is GVGTFRE. The Nucleophile role is filled by Asp266. The tract at residues 271–275 is RNA binding; important for wobble base 34 recognition; it reads TRVAR. Positions 308, 310, 313, and 339 each coordinate Zn(2+).

The protein belongs to the queuine tRNA-ribosyltransferase family. As to quaternary structure, homodimer. Within each dimer, one monomer is responsible for RNA recognition and catalysis, while the other monomer binds to the replacement base PreQ1. Zn(2+) serves as cofactor.

The enzyme catalyses 7-aminomethyl-7-carbaguanine + guanosine(34) in tRNA = 7-aminomethyl-7-carbaguanosine(34) in tRNA + guanine. It functions in the pathway tRNA modification; tRNA-queuosine biosynthesis. Functionally, catalyzes the base-exchange of a guanine (G) residue with the queuine precursor 7-aminomethyl-7-deazaguanine (PreQ1) at position 34 (anticodon wobble position) in tRNAs with GU(N) anticodons (tRNA-Asp, -Asn, -His and -Tyr). Catalysis occurs through a double-displacement mechanism. The nucleophile active site attacks the C1' of nucleotide 34 to detach the guanine base from the RNA, forming a covalent enzyme-RNA intermediate. The proton acceptor active site deprotonates the incoming PreQ1, allowing a nucleophilic attack on the C1' of the ribose to form the product. After dissociation, two additional enzymatic reactions on the tRNA convert PreQ1 to queuine (Q), resulting in the hypermodified nucleoside queuosine (7-(((4,5-cis-dihydroxy-2-cyclopenten-1-yl)amino)methyl)-7-deazaguanosine). The chain is Queuine tRNA-ribosyltransferase from Gloeobacter violaceus (strain ATCC 29082 / PCC 7421).